We begin with the raw amino-acid sequence, 157 residues long: Crossover junction endodeoxyribonuclease RuvC (157 aa).

Catalysis depends on residues Asp7, Glu67, and Asp140. Residues Asp7, Glu67, and Asp140 each contribute to the Mg(2+) site.

It belongs to the RuvC family. As to quaternary structure, homodimer which binds Holliday junction (HJ) DNA. The HJ becomes 2-fold symmetrical on binding to RuvC with unstacked arms; it has a different conformation from HJ DNA in complex with RuvA. In the full resolvosome a probable DNA-RuvA(4)-RuvB(12)-RuvC(2) complex forms which resolves the HJ. Requires Mg(2+) as cofactor.

It is found in the cytoplasm. The enzyme catalyses Endonucleolytic cleavage at a junction such as a reciprocal single-stranded crossover between two homologous DNA duplexes (Holliday junction).. The RuvA-RuvB-RuvC complex processes Holliday junction (HJ) DNA during genetic recombination and DNA repair. Endonuclease that resolves HJ intermediates. Cleaves cruciform DNA by making single-stranded nicks across the HJ at symmetrical positions within the homologous arms, yielding a 5'-phosphate and a 3'-hydroxyl group; requires a central core of homology in the junction. The consensus cleavage sequence is 5'-(A/T)TT(C/G)-3'. Cleavage occurs on the 3'-side of the TT dinucleotide at the point of strand exchange. HJ branch migration catalyzed by RuvA-RuvB allows RuvC to scan DNA until it finds its consensus sequence, where it cleaves and resolves the cruciform DNA. This chain is Crossover junction endodeoxyribonuclease RuvC, found in Thermosipho melanesiensis (strain DSM 12029 / CIP 104789 / BI429).